The following is a 394-amino-acid chain: MAAETFLFTSESVNEGHPDKLCDQVSDAVLDACLAQDPDSKVACETCTKTNMVMVFGEITTKATVDYEKIVRDTCRDIGFISDDVGLDADHCKVLVNIEQQSPDIAQGVHGHFTKRPEEVGAGDQGIMFGYATDETPELMPLTHMLATKLGARLTEVRKNGTCAWLRPDGKTQVTIEYLNEGGAMVPVRVHTVLISTQHDETVTNDEIAADLKEHVIKPVIPGKYLDENTIFHLNPSGRFVIGGPHGDAGLTGRKIIIDTYGGWGAHGGGAFSGKDPTKVDRSGAYIARQAAKSIIASGLARRCIVQISYAIGVPEPLSVFVDSYGTGKIPDREILKLVKENFDFRPGMISINLDLKKGGKRFIKTAAYGHFGRDDADFTWEVVKPLKFDKASA.

Glu-11 provides a ligand contact to Mg(2+). His-17 lines the ATP pocket. K(+) is bound at residue Glu-45. The L-methionine site is built by Glu-58 and Gln-101. ATP is bound by residues 169-171 (DGK), 237-240 (SGRF), Asp-248, 254-255 (RK), Ala-271, Lys-275, and Lys-279. Residue Asp-248 coordinates L-methionine. L-methionine is bound at residue Lys-279.

This sequence belongs to the AdoMet synthase family. Homotetramer. Mn(2+) serves as cofactor. It depends on Mg(2+) as a cofactor. Co(2+) is required as a cofactor. Requires K(+) as cofactor.

It localises to the cytoplasm. It carries out the reaction L-methionine + ATP + H2O = S-adenosyl-L-methionine + phosphate + diphosphate. The protein operates within amino-acid biosynthesis; S-adenosyl-L-methionine biosynthesis; S-adenosyl-L-methionine from L-methionine: step 1/1. In terms of biological role, catalyzes the formation of S-adenosylmethionine from methionine and ATP. The reaction comprises two steps that are both catalyzed by the same enzyme: formation of S-adenosylmethionine (AdoMet) and triphosphate, and subsequent hydrolysis of the triphosphate. The protein is S-adenosylmethionine synthase 2 (SAM2) of Hordeum vulgare (Barley).